The following is a 407-amino-acid chain: Argininosuccinate synthase (407 aa).

Residues 16–24 and Ala44 each bind ATP; that span reads AYSGGLDTS. Positions 96 and 101 each coordinate L-citrulline. Gly126 provides a ligand contact to ATP. Positions 128, 132, and 133 each coordinate L-aspartate. Position 132 (Asn132) interacts with L-citrulline. L-citrulline is bound by residues Arg136, Ser185, Ser194, Glu270, and Tyr282.

The protein belongs to the argininosuccinate synthase family. Type 1 subfamily. Homotetramer.

Its subcellular location is the cytoplasm. The enzyme catalyses L-citrulline + L-aspartate + ATP = 2-(N(omega)-L-arginino)succinate + AMP + diphosphate + H(+). It functions in the pathway amino-acid biosynthesis; L-arginine biosynthesis; L-arginine from L-ornithine and carbamoyl phosphate: step 2/3. The polypeptide is Argininosuccinate synthase (Shewanella frigidimarina (strain NCIMB 400)).